Here is a 462-residue protein sequence, read N- to C-terminus: Myo-inositol transporter 3B (462 aa).

The next 10 helical transmembrane spans lie at 1-21 (MAIL…ASSY), 31-51 (IILG…ITET), 61-81 (IGVN…IGAG), 91-111 (LLFA…HYLP), 194-214 (LCGF…LGLS), 218-238 (LGGL…MSLV), 245-265 (GLML…IIGF), 289-309 (VVIG…SHLV), 324-344 (GSGV…VSYL), and 354-374 (GTYG…VFCF).

It belongs to the major facilitator superfamily. Sugar transporter (TC 2.A.1.1) family.

Its subcellular location is the cell membrane. The enzyme catalyses myo-inositol(out) + H(+)(out) = myo-inositol(in) + H(+)(in). Its function is as follows. Transporter for myo-inositol. In Cryptococcus neoformans var. grubii serotype A (strain H99 / ATCC 208821 / CBS 10515 / FGSC 9487) (Filobasidiella neoformans var. grubii), this protein is Myo-inositol transporter 3B.